A 269-amino-acid polypeptide reads, in one-letter code: Phosphatidate cytidylyltransferase (269 aa).

8 helical membrane passes run 13-33 (LAAIVFLFLVIVGKLPFTILI), 50-70 (LKLVSLPGLIGLLLLWMFLLP), 81-101 (ISKMEIALFAVLLLLTYTVLV), 110-130 (VGFITLAAIYIGMCFHYFIEI), 138-158 (LTYIFYACVVIWSTDSGAYFV), 180-200 (FAGGIVIALVLATIFQLVAQL), 201-221 (PIPYIYLLLITLFLSVFGQLG), and 247-267 (ILDRFDSFLFVMPFLYFLLAL).

The protein belongs to the CDS family.

The protein resides in the cell membrane. The catalysed reaction is a 1,2-diacyl-sn-glycero-3-phosphate + CTP + H(+) = a CDP-1,2-diacyl-sn-glycerol + diphosphate. The protein operates within phospholipid metabolism; CDP-diacylglycerol biosynthesis; CDP-diacylglycerol from sn-glycerol 3-phosphate: step 3/3. The chain is Phosphatidate cytidylyltransferase (cdsA) from Bacillus subtilis (strain 168).